The primary structure comprises 382 residues: MAKQDFYEILGVPKTAEEREIKKAYKRLAMKFHPDRNQGDKEAEAKFKEIKEAYEILTDAQKRAAYDQYGHAAFEQGGMGGGGYGGGGFGGGGADFGDIFGDVFGDIFGGGRGRQRASRGADLRYNMELTLEEAVRGVTKEIRIPTLEECDICHGSGAKVGTKPQTCPTCHGSGQVQIRQGFFAVQQACPHCHGRGTLIKDPCNKCHGHGRVEKTKTLSVKIPAGVDTGDRIRLAGEGEAGEHGAQAGDLYVQVQVKQHAIFEREGNNLYCEVPINFAMAALGGEIEVPTLDGRVNLKVPGETQTGKLFRMRGRGVKSVRGGAQGDLLCRVVVETPVGLNDKQKQLLKELQESFGGPTGENNSPRSKSFFDGVKKFFDDLTR.

The 66-residue stretch at aspartate 5–glycine 70 folds into the J domain. A CR-type zinc finger spans residues glycine 137–threonine 215. Cysteine 150, cysteine 153, cysteine 167, cysteine 170, cysteine 189, cysteine 192, cysteine 203, and cysteine 206 together coordinate Zn(2+). CXXCXGXG motif repeat units follow at residues cysteine 150–glycine 157, cysteine 167–glycine 174, cysteine 189–glycine 196, and cysteine 203–glycine 210.

The protein belongs to the DnaJ family. As to quaternary structure, homodimer. The cofactor is Zn(2+).

Its subcellular location is the cytoplasm. Functionally, participates actively in the response to hyperosmotic and heat shock by preventing the aggregation of stress-denatured proteins and by disaggregating proteins, also in an autonomous, DnaK-independent fashion. Unfolded proteins bind initially to DnaJ; upon interaction with the DnaJ-bound protein, DnaK hydrolyzes its bound ATP, resulting in the formation of a stable complex. GrpE releases ADP from DnaK; ATP binding to DnaK triggers the release of the substrate protein, thus completing the reaction cycle. Several rounds of ATP-dependent interactions between DnaJ, DnaK and GrpE are required for fully efficient folding. Also involved, together with DnaK and GrpE, in the DNA replication of plasmids through activation of initiation proteins. In Enterobacter sp. (strain 638), this protein is Chaperone protein DnaJ.